Consider the following 308-residue polypeptide: Phenylcoumaran benzylic ether reductase Pyrc5 (308 aa).

NADP(+) contacts are provided by residues 11–17 (GGTGYIG), arginine 36, and lysine 45. Lysine 133 serves as the catalytic Proton acceptor. Residue arginine 137 coordinates NADP(+).

Belongs to the NmrA-type oxidoreductase family. Isoflavone reductase subfamily.

It catalyses the reaction (-)-dehydrodiconiferyl alcohol + NADPH + H(+) = (S)-isodihydrodehydrodiconiferyl alcohol + NADP(+). The enzyme catalyses (+)-dehydrodiconiferyl alcohol + NADPH + H(+) = (R)-isodihydrodehydrodiconiferyl alcohol + NADP(+). Oxidoreductase involved in lignan biosynthesis. Catalyzes the NADPH-dependent reduction of phenylcoumaran benzylic ethers. Converts dehydrodiconiferyl alcohol (DDC) to isodihydrodehydrodiconiferyl alcohol (IDDDC). The chain is Phenylcoumaran benzylic ether reductase Pyrc5 from Pyrus communis (Pear).